A 308-amino-acid chain; its full sequence is Aspartate carbamoyltransferase catalytic subunit (308 aa).

Carbamoyl phosphate contacts are provided by Arg-58 and Thr-59. Lys-86 provides a ligand contact to L-aspartate. Residues Arg-108, His-136, and Gln-139 each coordinate carbamoyl phosphate. L-aspartate-binding residues include Arg-169 and Arg-227. Gly-268 and Pro-269 together coordinate carbamoyl phosphate.

The protein belongs to the aspartate/ornithine carbamoyltransferase superfamily. ATCase family. As to quaternary structure, heterododecamer (2C3:3R2) of six catalytic PyrB chains organized as two trimers (C3), and six regulatory PyrI chains organized as three dimers (R2).

It catalyses the reaction carbamoyl phosphate + L-aspartate = N-carbamoyl-L-aspartate + phosphate + H(+). It functions in the pathway pyrimidine metabolism; UMP biosynthesis via de novo pathway; (S)-dihydroorotate from bicarbonate: step 2/3. Catalyzes the condensation of carbamoyl phosphate and aspartate to form carbamoyl aspartate and inorganic phosphate, the committed step in the de novo pyrimidine nucleotide biosynthesis pathway. In Chloroflexus aggregans (strain MD-66 / DSM 9485), this protein is Aspartate carbamoyltransferase catalytic subunit.